A 263-amino-acid polypeptide reads, in one-letter code: Proliferating cell nuclear antigen (263 aa).

The DNA-binding element occupies 61 to 80; the sequence is RCDRTINLGLSLANMSKALK.

This sequence belongs to the PCNA family. In terms of assembly, homotrimer. Forms a complex with activator 1 heteropentamer in the presence of ATP.

It localises to the nucleus. In terms of biological role, this protein is an auxiliary protein of DNA polymerase delta and is involved in the control of eukaryotic DNA replication by increasing the polymerase's processibility during elongation of the leading strand. The chain is Proliferating cell nuclear antigen (pcn-1) from Caenorhabditis elegans.